A 445-amino-acid polypeptide reads, in one-letter code: 6-phosphogluconate dehydrogenase, decarboxylating (445 aa).

NADP(+)-binding positions include 1–4, 22–24, 63–65, and asparagine 91; these read AVMG, NRS, and VKA. Residues asparagine 91 and 117 to 119 each bind substrate; that span reads SGG. Lysine 172 functions as the Proton acceptor in the catalytic mechanism. Residue 175–176 participates in substrate binding; sequence HN. Residue glutamate 179 is the Proton donor of the active site. Substrate is bound by residues tyrosine 180, lysine 249, arginine 276, arginine 434, and histidine 440.

The protein belongs to the 6-phosphogluconate dehydrogenase family. Homodimer.

It catalyses the reaction 6-phospho-D-gluconate + NADP(+) = D-ribulose 5-phosphate + CO2 + NADPH. It participates in carbohydrate degradation; pentose phosphate pathway; D-ribulose 5-phosphate from D-glucose 6-phosphate (oxidative stage): step 3/3. Functionally, catalyzes the oxidative decarboxylation of 6-phosphogluconate to ribulose 5-phosphate and CO(2), with concomitant reduction of NADP to NADPH. In Shigella boydii, this protein is 6-phosphogluconate dehydrogenase, decarboxylating (gnd).